An 892-amino-acid polypeptide reads, in one-letter code: Alanine--tRNA ligase (892 aa).

The Zn(2+) site is built by H565, H569, C678, and H682. The interval G857–A876 is disordered.

This sequence belongs to the class-II aminoacyl-tRNA synthetase family. Requires Zn(2+) as cofactor.

The protein resides in the cytoplasm. It carries out the reaction tRNA(Ala) + L-alanine + ATP = L-alanyl-tRNA(Ala) + AMP + diphosphate. In terms of biological role, catalyzes the attachment of alanine to tRNA(Ala) in a two-step reaction: alanine is first activated by ATP to form Ala-AMP and then transferred to the acceptor end of tRNA(Ala). Also edits incorrectly charged Ser-tRNA(Ala) and Gly-tRNA(Ala) via its editing domain. In Bradyrhizobium diazoefficiens (strain JCM 10833 / BCRC 13528 / IAM 13628 / NBRC 14792 / USDA 110), this protein is Alanine--tRNA ligase.